We begin with the raw amino-acid sequence, 839 residues long: Molybdenum cofactor sulfurase (839 aa).

The residue at position 237 (lysine 237) is an N6-(pyridoxal phosphate)lysine. Residue cysteine 401 is part of the active site. The span at 651 to 662 shows a compositional bias: polar residues; sequence DQNYSQKQSPSM. Residues 651–678 are disordered; sequence DQNYSQKQSPSMPGSFPQAPSSPDPYPT. An MOSC domain is found at 656 to 834; it reads QKQSPSMPGS…IMVGDAVTPS (179 aa).

The protein belongs to the class-V pyridoxal-phosphate-dependent aminotransferase family. MOCOS subfamily. The cofactor is pyridoxal 5'-phosphate.

The catalysed reaction is Mo-molybdopterin + L-cysteine + AH2 = thio-Mo-molybdopterin + L-alanine + A + H2O. It participates in cofactor biosynthesis; molybdopterin biosynthesis. Sulfurates the molybdenum cofactor. Sulfation of molybdenum is essential for xanthine dehydrogenase (XDH) and aldehyde oxidase (ADO) enzymes in which molybdenum cofactor is liganded by 1 oxygen and 1 sulfur atom in active form. In Emericella nidulans (strain FGSC A4 / ATCC 38163 / CBS 112.46 / NRRL 194 / M139) (Aspergillus nidulans), this protein is Molybdenum cofactor sulfurase.